Here is a 332-residue protein sequence, read N- to C-terminus: MLSIVYPSWIRPEIIPSFPYFRWYGFMYVVAFSIAYILFRYQVRRGELDKWSRVSEPVTQDDIMSFFTWTILGILIGARVFSTMVYEVDLLYMRKPWLIFWPFSLQTGEWVGLRGMSYHGGLIGALVGGGLWTQSHGRSFLAWADVAAASTPLGYTFGRIGNFLNAELYGRITDIPIGMIFPNVPLSDMFPASEPWVREFAQRVGIHVQEGARLVNLPRHPSQIYEAFFEGIVLWCILWCARRVKTYNGFLVCLYVVGYGVFRFFIEYFRQPDAHLGYRFSATQSSPIYLFQSWSDVSTGQILCVLMILAGLGGMFALSAYHKRDSVRKARV.

3 consecutive transmembrane segments (helical) span residues 18-38, 66-86, and 111-131; these read FPYF…AYIL, FFTW…TMVY, and VGLR…GGGL. Arg-159 contributes to the a 1,2-diacyl-sn-glycero-3-phospho-(1'-sn-glycerol) binding site. 2 helical membrane passes run 249–269 and 302–322; these read GFLV…IEYF and ILCV…SAYH.

Belongs to the Lgt family.

The protein localises to the cell inner membrane. The enzyme catalyses L-cysteinyl-[prolipoprotein] + a 1,2-diacyl-sn-glycero-3-phospho-(1'-sn-glycerol) = an S-1,2-diacyl-sn-glyceryl-L-cysteinyl-[prolipoprotein] + sn-glycerol 1-phosphate + H(+). Its pathway is protein modification; lipoprotein biosynthesis (diacylglyceryl transfer). In terms of biological role, catalyzes the transfer of the diacylglyceryl group from phosphatidylglycerol to the sulfhydryl group of the N-terminal cysteine of a prolipoprotein, the first step in the formation of mature lipoproteins. The sequence is that of Phosphatidylglycerol--prolipoprotein diacylglyceryl transferase from Treponema pallidum (strain Nichols).